The sequence spans 221 residues: Ribosomal RNA small subunit methyltransferase G (221 aa).

S-adenosyl-L-methionine is bound by residues glycine 89, leucine 94, 140-141, and arginine 154; that span reads VE.

The protein belongs to the methyltransferase superfamily. RNA methyltransferase RsmG family.

It localises to the cytoplasm. The catalysed reaction is guanosine(527) in 16S rRNA + S-adenosyl-L-methionine = N(7)-methylguanosine(527) in 16S rRNA + S-adenosyl-L-homocysteine. In terms of biological role, specifically methylates the N7 position of guanine in position 527 of 16S rRNA. The protein is Ribosomal RNA small subunit methyltransferase G of Methylibium petroleiphilum (strain ATCC BAA-1232 / LMG 22953 / PM1).